Reading from the N-terminus, the 803-residue chain is MRSLISVAVLSALPTAFSQANTSYTDYNVEANPDLFPLCLQHLNASFPDCASGPLSLTPVCDRSLSPKDRATALVSLFTFDELVNNTGNTGLGVSRLGLPNYQVWGEALHGVGRANFVESGNFSWATSFPMPITMMAALNKTLIHQIGTIVSTQLRAFSNAGLGGVDVYSPNINTFRHPVWGRGQETPGEDAFLTSVYGYEYITALQGGVDPETLKIIATAKHYAGYDIESWNNHSRLGNDMQITQQELSEYYTPPFIVASRDAKVRSVMCSYNAVNGVPSCANKFFLQTLLRDTFEFSEDGYVSGDCGAVYNVWNPHGYASNEAAASADSILAGTDIDCGTSYQWHSEDAFEDSLVSRSDIERGVIRLYSNLVQAGYFDGEDAPYRDITWDDVLSTDAWNIAYEAAVEGIVLLKNDETLPLSKDIKSVAVIGPWANVTEELQGNYFGPAPYLISPLTGFRDSGLDVHYALGTNLTSHSTSGFEEALTAAKQADAIIFAGGIDNTIEAEAMDRENITWPGNQLDLISKLSELGKPLVVLQMGGGQVDSSSLKDNDNVNALIWGGYPGQSGGHALADIITGKRAPAGRLVTTQYPAEYAEVFPAIDMNLRPNETSGNPGQTYMWYTGTPVYEFGHGLFYTTFEESTETTDAGSFNIQTVLTTPHSGYEHAQQKTLLNFTATVKNTGERESDYTALVYVNTTAGPAPYPKKWVVGFDRLGGLEPGDSQTLTVPVTVESVARTDEQGNRVLYPGSYELALNNERSVVVKFELKGEEAVILSWPEDTTSDFVSSIDGGLDRKQDVIA.

Residues 1–18 form the signal peptide; sequence MRSLISVAVLSALPTAFS. N-linked (GlcNAc...) asparagine glycosylation is found at Asn21, Asn44, Asn85, Asn122, Asn140, and Asn234. Asp307 is a catalytic residue. N-linked (GlcNAc...) asparagine glycans are attached at residues Asn437, Asn474, Asn515, Asn611, Asn676, and Asn698.

This sequence belongs to the glycosyl hydrolase 3 family.

Its subcellular location is the secreted. The catalysed reaction is Hydrolysis of (1-&gt;4)-beta-D-xylans, to remove successive D-xylose residues from the non-reducing termini.. Its pathway is glycan degradation; xylan degradation. Xylan 1,4-beta-xylosidase involved in the hydrolysis of xylan, a major structural heterogeneous polysaccharide found in plant biomass representing the second most abundant polysaccharide in the biosphere, after cellulose. This is Exo-1,4-beta-xylosidase xlnD (xlnD) from Emericella nidulans (strain FGSC A4 / ATCC 38163 / CBS 112.46 / NRRL 194 / M139) (Aspergillus nidulans).